A 225-amino-acid polypeptide reads, in one-letter code: Respiratory nitrate reductase 1 gamma chain (225 aa).

Position 1 is an N-formylmethionine (Met-1). At 1–3 the chain is on the periplasmic side; sequence MQF. A helical transmembrane segment spans residues 4 to 29; that stretch reads LNMFFFDIYPYIAGAVFLIGSWLRYD. Residues 30–47 are Cytoplasmic-facing; the sequence is YGQYTWRAASSQMLDRKG. Residues 48 to 70 form a helical membrane-spanning segment; sequence MNLASNLFHIGILGIFVGHFFGM. Residues His-56 and His-66 each coordinate heme b. Over 71–82 the chain is Periplasmic; it reads LTPHWMYEAWLP. Residues 83-112 traverse the membrane as a helical segment; that stretch reads IEVKQKMAMFAGGASGVLCLIGGVLLLKRR. The Cytoplasmic portion of the chain corresponds to 113–124; it reads LFSPRVRATTTG. Residues 125 to 148 form a helical membrane-spanning segment; sequence ADILILSLLVIQCALGLLTIPFSA. Residues 149–182 lie on the Periplasmic side of the membrane; that stretch reads QHMDGSEMMKLVGWAQSVVTFHGGASQHLDGVAF. Residues 183–198 form a helical membrane-spanning segment; sequence IFRLHLVLGMTLFLLF. The heme b site is built by His-187 and His-205. At 199–225 the chain is on the cytoplasmic side; the sequence is PFSRLIHIWSVPVEYLTRKYQLVRARH.

In terms of assembly, dimer of heterotrimers each composed of an alpha, a beta and a gamma chain. Alpha and beta are catalytic chains; gamma chains are involved in binding the enzyme complex to the cytoplasmic membrane. It depends on heme as a cofactor.

It localises to the cell inner membrane. The enzyme catalyses nitrate + a quinol = a quinone + nitrite + H2O. Functionally, the nitrate reductase enzyme complex allows E.coli to use nitrate as an electron acceptor during anaerobic growth. The gamma chain is a membrane-embedded heme-iron unit resembling cytochrome b, which transfers electrons from quinones to the beta subunit. The chain is Respiratory nitrate reductase 1 gamma chain (narI) from Escherichia coli (strain K12).